The primary structure comprises 479 residues: MNLPQNIRYRRYQDWTEEEIKSIKTNVALSPWHTTYHIEPKTGLLNDPNGFSYFNGKFNLFYQNWPFGAAHGLKSWIHTESEDLVHFKETGTVLYPDTSHDSHGAYSGSAYEIGDQLFLFYTGNVRDENWVRHPLQIGAFMDKKGNIQKFTDVLIKQPNDVTEHFRDPQIFNYKGQFYAIVGAQSLDKKGFIKLYKAVDNDIKNWQEVGNLDFGGSKSEYMIECPNLVFINEQPVLIYSPQGLSKSELDYHNIYPNTYKVCQSFDTEKPALVDASEIQNLDFGFECYATQAFNAPDGRVYAVSWIGLPDIDYPSDSYDYQGALSLVKELSLKHGKLYQYPVEAVRSLRSEKEAVTYKPETNNTYELELTFDSSSVNELLLFADNKGNGLAITVDTKMGTILIDRSKAGEQYALEFGSQRSCSIQAKETVVNIFVDKSIFEIFINKGEKVFTGRVFPNDKQTGIVIKSGKPSGNYYELKY.

Substrate is bound by residues 44 to 47 (LLND), Gln63, 106 to 107 (YS), 166 to 167 (RD), and Glu223. The active site involves Asp47.

This sequence belongs to the glycosyl hydrolase 32 family.

The protein localises to the cytoplasm. It carries out the reaction Hydrolysis of terminal non-reducing beta-D-fructofuranoside residues in beta-D-fructofuranosides.. The protein operates within glycan biosynthesis; sucrose metabolism. In Streptococcus mutans serotype c (strain ATCC 700610 / UA159), this protein is Sucrose-6-phosphate hydrolase (scrB).